The following is a 1257-amino-acid chain: Probable aldehyde oxidase gad-3 (1257 aa).

The 2Fe-2S ferredoxin-type domain occupies 4-91 (TGIFFNVNGK…KTFVITVEGV (88 aa)). Residues cysteine 43, cysteine 48, cysteine 51, and cysteine 73 each contribute to the [2Fe-2S] cluster site. In terms of domain architecture, FAD-binding PCMH-type spans 229 to 459 (LKGDRIELLL…TSLEVHIDAL (231 aa)). Residue glutamate 1208 is the Proton acceptor of the active site.

It belongs to the xanthine dehydrogenase family. [2Fe-2S] cluster serves as cofactor. It depends on FAD as a cofactor. Requires Mo-molybdopterin as cofactor.

It catalyses the reaction an aldehyde + O2 + H2O = a carboxylate + H2O2 + H(+). In terms of biological role, may be involved in the metabolism of 1-methylnicotinamide (MNA). Linked to regulation of longevity through generation of reactive oxygen species, where it probably functions in a pathway downstream of the sirtuin sir-2.1 and the nicotinamide N-methyltransferase anmt-1. In Caenorhabditis elegans, this protein is Probable aldehyde oxidase gad-3.